Consider the following 300-residue polypeptide: Bis(5'-nucleosyl)-tetraphosphatase, symmetrical (300 aa).

This sequence belongs to the Ap4A hydrolase family.

It carries out the reaction P(1),P(4)-bis(5'-adenosyl) tetraphosphate + H2O = 2 ADP + 2 H(+). Hydrolyzes diadenosine 5',5'''-P1,P4-tetraphosphate to yield ADP. The protein is Bis(5'-nucleosyl)-tetraphosphatase, symmetrical of Pseudomonas syringae pv. tomato (strain ATCC BAA-871 / DC3000).